A 308-amino-acid polypeptide reads, in one-letter code: UDP-N-acetylenolpyruvoylglucosamine reductase (308 aa).

Residues 24–187 (RVGGPADWLF…VSASLQGVPG (164 aa)) form the FAD-binding PCMH-type domain. The active site involves Arg-167. The segment at 199-230 (QLDKRDQTQPTKERSAGSTFRNPAGFSSTGRA) is disordered. A compositionally biased stretch (basic and acidic residues) spans 200-213 (LDKRDQTQPTKERS). Residues 214 to 228 (AGSTFRNPAGFSSTG) are compositionally biased toward polar residues. Ser-216 functions as the Proton donor in the catalytic mechanism. Residue Glu-298 is part of the active site.

This sequence belongs to the MurB family. It depends on FAD as a cofactor.

The protein resides in the cytoplasm. The catalysed reaction is UDP-N-acetyl-alpha-D-muramate + NADP(+) = UDP-N-acetyl-3-O-(1-carboxyvinyl)-alpha-D-glucosamine + NADPH + H(+). It functions in the pathway cell wall biogenesis; peptidoglycan biosynthesis. Its function is as follows. Cell wall formation. The protein is UDP-N-acetylenolpyruvoylglucosamine reductase of Ruegeria pomeroyi (strain ATCC 700808 / DSM 15171 / DSS-3) (Silicibacter pomeroyi).